The chain runs to 395 residues: MGKVRNISGCVAVAHGVRLADVDVICSYPIRPYTGIMSELARMVADGELDAEFVHGEGEHAQLSVVYGASAAGARVFTGSSGVGVTYAMEVYSPISGERLPVQMAIADRTLDPPGDFGEEHTDAECCRDQGWIQGWASTPQEALDNTLIYYRVGEDQRVLLPQYACLDGYFVSHILGPVDIPDEAQVKEFLPPYKNHHVLDPRKPQIIGPQIEPAMGPPLQYQRYQAVKGVHKVLEEACDEFARIFGRKYDPYLDEYLTDDAEVIIFGQGAHMETAKAVARRLRNLGEKVGVARLRTFRPFPTEQIKERLSKFKAIGVLDVSANFGISCSGGVLLSELRAALYDYGDKVKTVGFVAGLGGEVVTHDEFYRMFQKLKEIAKTGKVEQTSYWIPFEL.

As to quaternary structure, dimer of heterotrimer of one alpha, one beta and one delta subunit.

The catalysed reaction is oxidized 2[4Fe-4S]-[ferredoxin] + oxalate = reduced 2[4Fe-4S]-[ferredoxin] + 2 CO2. Its function is as follows. Catalyzes the anaerobic oxidation of oxalate using a broad range of electron acceptors, including ferredoxin and the nickel-dependent carbon monoxide dehydrogenase. Does not require coenzyme A as cosubstrate. Enables anaerobic growth on oxalate which is used as energy source by the bacteria. In Moorella thermoacetica (strain ATCC 39073 / JCM 9320), this protein is Oxalate oxidoreductase subunit alpha.